Reading from the N-terminus, the 236-residue chain is 2-C-methyl-D-erythritol 4-phosphate cytidylyltransferase (236 aa).

Belongs to the IspD/TarI cytidylyltransferase family. IspD subfamily. As to quaternary structure, homodimer.

It catalyses the reaction 2-C-methyl-D-erythritol 4-phosphate + CTP + H(+) = 4-CDP-2-C-methyl-D-erythritol + diphosphate. The protein operates within isoprenoid biosynthesis; isopentenyl diphosphate biosynthesis via DXP pathway; isopentenyl diphosphate from 1-deoxy-D-xylulose 5-phosphate: step 2/6. Its function is as follows. Catalyzes the formation of 4-diphosphocytidyl-2-C-methyl-D-erythritol from CTP and 2-C-methyl-D-erythritol 4-phosphate (MEP). The polypeptide is 2-C-methyl-D-erythritol 4-phosphate cytidylyltransferase (Klebsiella pneumoniae subsp. pneumoniae (strain ATCC 700721 / MGH 78578)).